The sequence spans 70 residues: Small ribosomal subunit protein bS18c (70 aa).

The protein belongs to the bacterial ribosomal protein bS18 family. Part of the 30S ribosomal subunit.

It localises to the plastid. The protein resides in the chloroplast. The protein is Small ribosomal subunit protein bS18c of Pyropia yezoensis (Susabi-nori).